We begin with the raw amino-acid sequence, 201 residues long: Lipopolysaccharide core heptose(II)-phosphate phosphatase (201 aa).

A signal peptide spans 1–35 (MLAFTLRFIKNKRYLATLAGALVIIAGLTSQHAWS).

The protein belongs to the phosphoglycerate mutase family. Ais subfamily.

It is found in the periplasm. It functions in the pathway bacterial outer membrane biogenesis; lipopolysaccharide metabolism. Catalyzes the dephosphorylation of heptose(II) of the outer membrane lipopolysaccharide core. This Salmonella schwarzengrund (strain CVM19633) protein is Lipopolysaccharide core heptose(II)-phosphate phosphatase.